Consider the following 405-residue polypeptide: Multi-drug resistance efflux pump PmrA homolog (405 aa).

12 helical membrane-spanning segments follow: residues 13–33 (LFIT…VMPF), 50–70 (LYSG…APIW), 88–108 (IVMT…WLLG), 111–131 (LLMG…ASQA), 147–167 (MVSG…WFGM), 170–190 (VFLI…FFVH), 216–236 (ILFG…SIEP), 254–274 (FISG…SSFL), 286–306 (LILI…FVQS), 308–328 (LQLG…TPSV), 350–370 (MCSN…AGYI), and 374–394 (AAIV…FINF).

This sequence belongs to the major facilitator superfamily. TCR/Tet family.

It is found in the cell membrane. Efflux pump for various substrates. This chain is Multi-drug resistance efflux pump PmrA homolog (pmrA), found in Lactococcus lactis subsp. lactis (strain IL1403) (Streptococcus lactis).